The primary structure comprises 116 residues: Putative pterin-4-alpha-carbinolamine dehydratase (116 aa).

The protein belongs to the pterin-4-alpha-carbinolamine dehydratase family.

The catalysed reaction is (4aS,6R)-4a-hydroxy-L-erythro-5,6,7,8-tetrahydrobiopterin = (6R)-L-erythro-6,7-dihydrobiopterin + H2O. This chain is Putative pterin-4-alpha-carbinolamine dehydratase, found in Xylella fastidiosa (strain 9a5c).